Here is a 359-residue protein sequence, read N- to C-terminus: Peptide chain release factor 1 (359 aa).

Gln236 is subject to N5-methylglutamine. Residues 288 to 308 (QDEQDAERKSTIGTGDRSERI) form a disordered region. Over residues 293–308 (AERKSTIGTGDRSERI) the composition is skewed to basic and acidic residues.

The protein belongs to the prokaryotic/mitochondrial release factor family. Post-translationally, methylated by PrmC. Methylation increases the termination efficiency of RF1.

It is found in the cytoplasm. Peptide chain release factor 1 directs the termination of translation in response to the peptide chain termination codons UAG and UAA. The polypeptide is Peptide chain release factor 1 (Streptococcus uberis (strain ATCC BAA-854 / 0140J)).